The chain runs to 245 residues: Uroporphyrinogen-III C-methyltransferase (245 aa).

S-adenosyl-L-homocysteine contacts are provided by residues Pro-12, 87–89 (GGD), 117–118 (TA), Met-168, Ala-197, and Ala-225.

Belongs to the precorrin methyltransferase family.

The enzyme catalyses uroporphyrinogen III + 2 S-adenosyl-L-methionine = precorrin-2 + 2 S-adenosyl-L-homocysteine + H(+). The protein operates within cofactor biosynthesis; adenosylcobalamin biosynthesis; precorrin-2 from uroporphyrinogen III: step 1/1. It participates in porphyrin-containing compound metabolism; siroheme biosynthesis; precorrin-2 from uroporphyrinogen III: step 1/1. Its function is as follows. Catalyzes the two successive C-2 and C-7 methylation reactions involved in the conversion of uroporphyrinogen III to precorrin-2 via the intermediate formation of precorrin-1. It is a step in the biosynthesis of both cobalamin (vitamin B12) and siroheme. This Pseudomonas aeruginosa (strain ATCC 15692 / DSM 22644 / CIP 104116 / JCM 14847 / LMG 12228 / 1C / PRS 101 / PAO1) protein is Uroporphyrinogen-III C-methyltransferase (cobA).